We begin with the raw amino-acid sequence, 420 residues long: MNLLVVGSGGREHAISKKLLESNNVEKVYCAPGNDGMRLDDIQLVAISETDKVGLIDFAKKADVSFVIVGPEVPLLEGVVDAFEEAGIKAFGPKANAALIEGSKDFAKQFMEKYAIPTAASRTFTDYAEAKAYLDERGVPIVIKADGLAAGKGVTVALEMEEAVLALKDMMLEEKFGDASLKVVIEDFLAGEEFSLMAFVNGEEVYPMAIAQDHKRAYEGDKGPNTGGMGAYSPVPHISEDVVNEAVEKILRPAAKGMVQEDRYFRGILYAGLILTTEGPKVIEFNARFGDPETQVVLPRLESDFAALIAALLNNEKPEVRFKKEGITLGVVLASAGYPEHYEKGNKLTGLNDIREDVAIYHAGTKQNENGEFVSSGGRVLLLAKEAETMSDARTLLYPEMQKLDNPNFFYRMDIGTKAE.

One can recognise an ATP-grasp domain in the interval 108–314 (KQFMEKYAIP…FAALIAALLN (207 aa)). ATP is bound at residue 134–195 (LDERGVPIVI…EDFLAGEEFS (62 aa)). 2 residues coordinate Mg(2+): glutamate 284 and asparagine 286.

Belongs to the GARS family. The cofactor is Mg(2+). Requires Mn(2+) as cofactor.

The enzyme catalyses 5-phospho-beta-D-ribosylamine + glycine + ATP = N(1)-(5-phospho-beta-D-ribosyl)glycinamide + ADP + phosphate + H(+). It functions in the pathway purine metabolism; IMP biosynthesis via de novo pathway; N(1)-(5-phospho-D-ribosyl)glycinamide from 5-phospho-alpha-D-ribose 1-diphosphate: step 2/2. The sequence is that of Phosphoribosylamine--glycine ligase from Listeria innocua serovar 6a (strain ATCC BAA-680 / CLIP 11262).